We begin with the raw amino-acid sequence, 43 residues long: Protein PsbN (43 aa).

A helical membrane pass occupies residues 4–24; it reads GILVVIFISCLLVSFTGYTIY.

Belongs to the PsbN family.

Its subcellular location is the plastid. It is found in the chloroplast thylakoid membrane. In terms of biological role, may play a role in photosystem I and II biogenesis. This Chaetosphaeridium globosum (Charophycean green alga) protein is Protein PsbN.